The sequence spans 245 residues: tRNA pseudouridine synthase A (245 aa).

The Nucleophile role is filled by aspartate 52. Position 111 (tyrosine 111) interacts with substrate.

This sequence belongs to the tRNA pseudouridine synthase TruA family. In terms of assembly, homodimer.

It catalyses the reaction uridine(38/39/40) in tRNA = pseudouridine(38/39/40) in tRNA. Formation of pseudouridine at positions 38, 39 and 40 in the anticodon stem and loop of transfer RNAs. This chain is tRNA pseudouridine synthase A, found in Ehrlichia canis (strain Jake).